The following is a 348-amino-acid chain: Lipoyl synthase (348 aa).

Positions 55, 60, 66, 81, 85, 88, and 292 each coordinate [4Fe-4S] cluster. The Radical SAM core domain occupies 67-281 (WESREATFLI…SDEAYEIGFA (215 aa)).

Belongs to the radical SAM superfamily. Lipoyl synthase family. The cofactor is [4Fe-4S] cluster.

The protein resides in the cytoplasm. The catalysed reaction is [[Fe-S] cluster scaffold protein carrying a second [4Fe-4S](2+) cluster] + N(6)-octanoyl-L-lysyl-[protein] + 2 oxidized [2Fe-2S]-[ferredoxin] + 2 S-adenosyl-L-methionine + 4 H(+) = [[Fe-S] cluster scaffold protein] + N(6)-[(R)-dihydrolipoyl]-L-lysyl-[protein] + 4 Fe(3+) + 2 hydrogen sulfide + 2 5'-deoxyadenosine + 2 L-methionine + 2 reduced [2Fe-2S]-[ferredoxin]. The protein operates within protein modification; protein lipoylation via endogenous pathway; protein N(6)-(lipoyl)lysine from octanoyl-[acyl-carrier-protein]: step 2/2. In terms of biological role, catalyzes the radical-mediated insertion of two sulfur atoms into the C-6 and C-8 positions of the octanoyl moiety bound to the lipoyl domains of lipoate-dependent enzymes, thereby converting the octanoylated domains into lipoylated derivatives. This is Lipoyl synthase from Corynebacterium efficiens (strain DSM 44549 / YS-314 / AJ 12310 / JCM 11189 / NBRC 100395).